The sequence spans 762 residues: Alpha-xylosidase XylQ (762 aa).

Residue Asp-414 is the Nucleophile of the active site. The active site involves Glu-417.

Belongs to the glycosyl hydrolase 31 family.

It is found in the cell membrane. It catalyses the reaction Hydrolysis of terminal, non-reducing alpha-D-xylose residues with release of alpha-D-xylose.. Its function is as follows. Involved in the metabolism of isoprimeverose. Hydrolyzes isoprimeverose into equimolar amounts of glucose and xylose. In vitro, can also use p-nitrophenyl-alpha-D-xylopyranoside (alpha-p-NPX). The polypeptide is Alpha-xylosidase XylQ (Lactiplantibacillus pentosus (Lactobacillus pentosus)).